The chain runs to 155 residues: 17.3 kDa class II heat shock protein (155 aa).

Positions 39–155 (DAKAMAATPA…KPKTIEVKVA (117 aa)) constitute a sHSP domain.

It belongs to the small heat shock protein (HSP20) family.

The protein resides in the cytoplasm. This is 17.3 kDa class II heat shock protein from Solanum peruvianum (Peruvian tomato).